We begin with the raw amino-acid sequence, 156 residues long: Small ribosomal subunit protein uS7 (156 aa).

The protein belongs to the universal ribosomal protein uS7 family. As to quaternary structure, part of the 30S ribosomal subunit. Contacts proteins S9 and S11.

In terms of biological role, one of the primary rRNA binding proteins, it binds directly to 16S rRNA where it nucleates assembly of the head domain of the 30S subunit. Is located at the subunit interface close to the decoding center, probably blocks exit of the E-site tRNA. This Dichelobacter nodosus (strain VCS1703A) protein is Small ribosomal subunit protein uS7.